Consider the following 434-residue polypeptide: Oxysterol-binding protein homolog 4 (434 aa).

An ALPS motif region spans residues 7-29 (SSSWTSFLKSIASFNGDLSSLSA). An OSBP-related domain (ORD) region spans residues 16–366 (SIASFNGDLS…WQRRWFKDFD (351 aa)). An a 1,2-diacyl-sn-glycero-3-phospho-(1D-myo-inositol 4-phosphate)-binding site is contributed by 24 to 29 (LSSLSA). Gln-96 provides a ligand contact to 20-hydroxycholesterol. Gln-96 lines the 25-hydroxycholesterol pocket. Residues Gln-96 and Arg-100 each contribute to the 7beta-hydroxycholesterol site. Gln-96 is a binding site for cholesterol. Position 96 (Gln-96) interacts with ergosterol. A 1,2-diacyl-sn-glycero-3-phospho-(1D-myo-inositol 4-phosphate)-binding positions include 109-112 (KPLN), 143-144 (HH), Lys-336, Glu-340, and Arg-344. Thr-370 carries the phosphothreonine modification. Ser-389 is modified (phosphoserine).

Belongs to the OSBP family.

It localises to the cytoplasm. The protein resides in the golgi apparatus membrane. Lipid transport protein (LTP) involved in non-vesicular transfer of lipids between membranes. Functions in phosphoinositide-coupled directional transport of various lipids by carrying the lipid molecule in a hydrophobic pocket and transferring it between membranes through the cytosol. Involved in maintenance of intracellular sterol distribution and homeostasis. Involved in lipid countertransport between the Golgi complex and membranes of the endoplasmic reticulum. Specifically exchanges sterol with phosphatidylinositol 4-phosphate (PI4P), delivering sterol to the Golgi in exchange for PI4P, which is delivered to the ER-localized PI4P phosphatase SAC1 for degradation. Thus, by maintaining a PI4P gradient at the ER/Golgi interface, SAC1 may drive PS transport. Displays a similar affinity for PI4P and sterols. Binds sterol and PI4P in a mutually exclusive manner. Involved in ergosterol transport from the plasma membrane (PM) to the ER. Mediates sterol transport from the ER to mitochondria. Involved in the negative regulation of Golgi-derived transport vesicle biogenesis. Plays a role in the positive regulation of vesicular transport of ceramide from the ER to the Golgi, negatively regulating COPII-mediated ER export of cargos. The polypeptide is Oxysterol-binding protein homolog 4 (Saccharomyces cerevisiae (strain ATCC 204508 / S288c) (Baker's yeast)).